The following is a 150-amino-acid chain: Macrodomain Ter protein (150 aa).

This sequence belongs to the MatP family. In terms of assembly, homodimer.

Its subcellular location is the cytoplasm. In terms of biological role, required for spatial organization of the terminus region of the chromosome (Ter macrodomain) during the cell cycle. Prevents early segregation of duplicated Ter macrodomains during cell division. Binds specifically to matS, which is a 13 bp signature motif repeated within the Ter macrodomain. This Salmonella typhi protein is Macrodomain Ter protein.